The following is a 1035-amino-acid chain: Integrin alpha-9 (1035 aa).

Residues 1–29 (MGGPAAPRGAGRLRALLLALVVAGIPAGA) form the signal peptide. Residues 30–981 (YNLDPQRPVH…LEPRGYVVGW (952 aa)) lie on the Extracellular side of the membrane. FG-GAP repeat units follow at residues 35–96 (QRPV…PDRR), 111–174 (SCGK…AKGR), 182–232 (EYKK…NTYL), 233–289 (KLND…SGTL), 290–349 (IKIF…GALE), 351–408 (QLAL…GIVP), and 411–474 (SMKL…LPGS). 3 disulfide bridges follow: Cys-87–Cys-97, Cys-142–Cys-162, and Cys-179–Cys-194. An N-linked (GlcNAc...) asparagine glycan is attached at Asn-225. Asp-312, Asn-314, Asp-316, Asp-320, Asp-373, Asp-375, Asp-377, Asp-381, Asp-435, Asp-437, Asn-439, and Asp-443 together coordinate Ca(2+). Asn-476 carries N-linked (GlcNAc...) asparagine glycosylation. The cysteines at positions 482 and 491 are disulfide-linked. An N-linked (GlcNAc...) asparagine glycan is attached at Asn-493. Residues Cys-497 and Cys-555 are joined by a disulfide bond. N-linked (GlcNAc...) asparagine glycosylation is present at Asn-612. A disulfide bridge links Cys-620 with Cys-625. 4 N-linked (GlcNAc...) asparagine glycosylation sites follow: Asn-654, Asn-658, Asn-672, and Asn-676. A disulfide bridge connects residues Cys-696 and Cys-706. Residues Asn-807 and Asn-854 are each glycosylated (N-linked (GlcNAc...) asparagine). Disulfide bonds link Cys-855-Cys-891 and Cys-898-Cys-903. An N-linked (GlcNAc...) asparagine glycan is attached at Asn-904. Residues 982 to 1002 (IIAISLLVGILIFLLLAVLLW) form a helical membrane-spanning segment. The Cytoplasmic portion of the chain corresponds to 1003 to 1035 (KMGFFRRRYKEIIEAEKNRKENEDSWDWVQKNQ). The GFFKR motif motif lies at 1005 to 1009 (GFFRR).

The protein belongs to the integrin alpha chain family. Heterodimer of an alpha and a beta subunit. Alpha-9 (ITGA9) associates with beta-1 (ITGB1). Integrin ITGA9:ITGB1 interacts with FBLN5 (via N-terminus). Integrin ITGA9:ITGB1 interacts with SPP1/OPN (via N-terminus). Integrin ITGA9:ITGB1 interacts with TNC/TNFN3 (via the 3rd Fibronectin type-III domain). Integrin ITGA9:ITGB1 interacts with SVEP1/polydom (via Sushi domain 21); thereby inhibits Ca(2+) intracellular signaling and as a result represses vasocontraction. In terms of tissue distribution, expressed in vascular smooth muscle cells (at protein level). Expressed in the airway epithelium (at protein level).

It localises to the membrane. Its function is as follows. Integrin alpha-9/beta-1 (ITGA9:ITGB1) is a receptor for VCAM1, cytotactin and osteopontin. It recognizes the sequence A-E-I-D-G-I-E-L in cytotactin. ITGA9:ITGB1 may play a crucial role in SVEP1/polydom-mediated myoblast cell adhesion. Integrin ITGA9:ITGB1 represses PRKCA-mediated L-type voltage-gated channel Ca(2+) influx and ROCK-mediated calcium sensitivity in vascular smooth muscle cells via its interaction with SVEP1, thereby inhibiting vasocontraction. The sequence is that of Integrin alpha-9 (ITGA9) from Homo sapiens (Human).